The following is a 155-amino-acid chain: Secreted RxLR effector protein RXLR-C301 (155 aa).

Positions 1-24 are cleaved as a signal peptide; that stretch reads MRLYALSVSLLAAITLLACVIASA. The RxLR-dEER signature appears at 34–64; the sequence is RRLSQDVSETEITELSESKKPTAQDIDNEER.

It belongs to the RxLR effector family.

The protein localises to the secreted. Its subcellular location is the host cell membrane. Its function is as follows. Secreted effector that does not suppress pattern-triggered immunity (PTI) in plant host. The sequence is that of Secreted RxLR effector protein RXLR-C301 from Plasmopara halstedii (Downy mildew of sunflower).